Reading from the N-terminus, the 451-residue chain is Vitamin D3 receptor (451 aa).

Residues proline 44 to methionine 112 constitute a DNA-binding region (nuclear receptor). Cysteine 47, cysteine 50, cysteine 64, cysteine 67, cysteine 83, cysteine 89, cysteine 99, and cysteine 102 together coordinate Zn(2+). 2 consecutive NR C4-type zinc fingers follow at residues cysteine 47–cysteine 67 and cysteine 83–cysteine 107. Hinge stretches follow at residues methionine 113–glutamate 149 and aspartate 120–glutamate 149. Positions glutamate 150–glycine 447 constitute an NR LBD domain. Serine 261 serves as a coordination point for calcitriol. Residues lysine 270 to lysine 288 are interaction with coactivator LXXLL motif. Calcitriol contacts are provided by arginine 298, serine 302, histidine 329, and histidine 421. Positions proline 440–asparagine 448 match the 9aaTAD motif.

Belongs to the nuclear hormone receptor family. NR1 subfamily. Homodimer in the absence of bound vitamin D3. Heterodimer with RXRA after vitamin D3 binding. Expressed in kidney and intestine.

It is found in the nucleus. The protein localises to the cytoplasm. Its function is as follows. Nuclear receptor for calcitriol, the active form of vitamin D3 which mediates the action of this vitamin on cells. Enters the nucleus upon vitamin D3 binding where it forms heterodimers with the retinoid X receptor/RXR. The VDR-RXR heterodimers bind to specific response elements on DNA and activate the transcription of vitamin D3-responsive target genes. Plays a central role in calcium homeostasis. Also functions as a receptor for the secondary bile acid lithocholic acid (LCA) and its metabolites. This is Vitamin D3 receptor (VDR) from Gallus gallus (Chicken).